Consider the following 338-residue polypeptide: Tetraacyldisaccharide 4'-kinase (338 aa).

Residue threonine 49 to threonine 56 coordinates ATP.

This sequence belongs to the LpxK family.

The catalysed reaction is a lipid A disaccharide + ATP = a lipid IVA + ADP + H(+). The protein operates within glycolipid biosynthesis; lipid IV(A) biosynthesis; lipid IV(A) from (3R)-3-hydroxytetradecanoyl-[acyl-carrier-protein] and UDP-N-acetyl-alpha-D-glucosamine: step 6/6. Functionally, transfers the gamma-phosphate of ATP to the 4'-position of a tetraacyldisaccharide 1-phosphate intermediate (termed DS-1-P) to form tetraacyldisaccharide 1,4'-bis-phosphate (lipid IVA). This is Tetraacyldisaccharide 4'-kinase from Geobacter metallireducens (strain ATCC 53774 / DSM 7210 / GS-15).